The chain runs to 110 residues: UPF0339 protein YegP (110 aa).

2 consecutive repeat copies span residues 10–58 (SSDN…RYEK) and 61–109 (ASNG…VKDN).

The protein belongs to the UPF0339 family. Duplicated subfamily.

This chain is UPF0339 protein YegP (yegP), found in Shigella flexneri.